The chain runs to 260 residues: Ribose-5-phosphate isomerase (260 aa).

It belongs to the ribose 5-phosphate isomerase family.

The protein localises to the cytoplasm. It catalyses the reaction aldehydo-D-ribose 5-phosphate = D-ribulose 5-phosphate. The protein operates within carbohydrate degradation; pentose phosphate pathway; D-ribose 5-phosphate from D-ribulose 5-phosphate (non-oxidative stage): step 1/1. The protein is Ribose-5-phosphate isomerase (RKI1) of Candida glabrata (strain ATCC 2001 / BCRC 20586 / JCM 3761 / NBRC 0622 / NRRL Y-65 / CBS 138) (Yeast).